Consider the following 161-residue polypeptide: Eukaryotic translation initiation factor 5A-1 (161 aa).

Position 54 is a hypusine (K54).

Belongs to the eIF-5A family. In terms of processing, lys-54 undergoes hypusination, a unique post-translational modification that consists in the addition of a butylamino group from spermidine to lysine side chain, leading to the formation of the unusual amino acid hypusine. eIF-5As are the only known proteins to undergo this modification, which is essential for their function. Expressed specifically in the germline in the distal region of gonads where germ cells actively proliferate.

The protein resides in the cytoplasm. Translation factor that promotes translation elongation and termination, particularly upon ribosome stalling at specific amino acid sequence contexts. Binds between the exit (E) and peptidyl (P) site of the ribosome and promotes rescue of stalled ribosome: specifically required for efficient translation of polyproline-containing peptides as well as other motifs that stall the ribosome. Acts as a ribosome quality control (RQC) cofactor by joining the RQC complex to facilitate peptidyl transfer during CAT tailing step. Required for mitotic germ cell proliferation, gametogenesis after entry into meiosis, and localization of the P granule component pgl-1 on P granules. The protein is Eukaryotic translation initiation factor 5A-1 (iff-1) of Caenorhabditis elegans.